The sequence spans 376 residues: Mitogen-activated protein kinase 4 (376 aa).

Residues 43-329 form the Protein kinase domain; the sequence is VPPLRPIGRG…VDEALCHPYL (287 aa). ATP-binding positions include 49 to 57 and lysine 72; that span reads IGRGAYGIV. The Proton acceptor role is filled by aspartate 169. Threonine 201 carries the post-translational modification Phosphothreonine. A TXY motif is present at residues 201 to 203; the sequence is TEY. A Phosphotyrosine modification is found at tyrosine 203.

Belongs to the protein kinase superfamily. CMGC Ser/Thr protein kinase family. MAP kinase subfamily. As to quaternary structure, interacts with MEKK1, MKK1, MKK2 and MKK6. May form a ternary complex composed of MEKK1 and MKK1/MKK2 and MPK4. Interacts with MKS1 and AP2C1. May form a ternary or larger complex with MKS1 and WRKY25 and/or WRKY33. Interacts with MAP65-1. No interactions with RACK1A, RACK1B or RACK1C. Interacts directly with ASR3 and mediates its phosphorylation. Binds to MEKK2. Interacts with PAT1. Binds to HT1. Post-translationally, dually phosphorylated on Thr-201 and Tyr-203, which activates the enzyme. Autophosphorylated on serine and tyrosine residues. Dephosphorylated by DSPTP1. Phosphorylated by MKK6 in vitro. In terms of tissue distribution, ubiquitous. Expressed in the veins and stomatal guard cells of leaf plates, petioles, stem, roots and flowers.

The protein resides in the cytoplasm. It is found in the nucleus. It localises to the cytoskeleton. The enzyme catalyses L-seryl-[protein] + ATP = O-phospho-L-seryl-[protein] + ADP + H(+). The catalysed reaction is L-threonyl-[protein] + ATP = O-phospho-L-threonyl-[protein] + ADP + H(+). With respect to regulation, activated by threonine and tyrosine phosphorylation. Activated by the MAP kinase kinases MKK1 and MKK2. Activated in response to touch, wounding, low temperature, low humidity, salt stress and the bacterial elicitors flagellin and harpin. Activated upon Pseudomonas syringae pv. tomato DC3000 infection. Repressed by the protein phosphatase 2C AP2C1. Repressed by DSPTP1-mediated dephosphorylation. Activated by the MAP kinase kinase MKK6 in vitro. Its function is as follows. The ANPs-MKK6-MPK4 module is involved in the regulation of plant cytokinesis during meiosis and mitosis. Essential to promote the progression of cytokinesis and for cellularization (formation of the cell plate) during male-specific meiosis. Involved in cortical microtubules organization and stabilization by regulating the phosphorylation state of microtubule-associated proteins such as MAP65-1. Involved in root hair development process. Negative regulator of systemic acquired resistance (SAR) and salicylic acid- (SA) mediated defense response. Required for jasmonic acid- (JA) mediated defense gene expression. May regulate activity of transcription factor controlling pathogenesis-related (PR) gene expression. Seems to act independently of the SAR regulatory protein NPR1 (Nonexpresser of PR1). Phosphorylates MKS1 and transcription factors WRKY25 and WRKY33. The MEKK1, MKK1/MKK2 and MPK4 function in a signaling pathway that modulates the expression of genes responding to biotic and abiotic stresses and also plays an important role in pathogen defense by negatively regulating innate immunity. Phosphorylates MEKK2 upon treatment with flg22. Involved in stomatal movement regulation by repressing HT1 and HT1-mediated GHR1 phosphorylation. The polypeptide is Mitogen-activated protein kinase 4 (Arabidopsis thaliana (Mouse-ear cress)).